A 568-amino-acid polypeptide reads, in one-letter code: Sulfate adenylyltransferase (568 aa).

The tract at residues Met-1–Tyr-162 is N-terminal. A catalytic region spans residues Asp-163–Thr-388. Residue Gln-190 coordinates sulfate. ATP contacts are provided by residues Gln-190–Asn-193 and Gly-284–His-287. Residues Thr-191, Arg-192, and Asn-193 contribute to the active site. Residue Arg-192 participates in sulfate binding. Residue Ala-288 participates in sulfate binding. Residue Val-326 participates in ATP binding. Residues Gln-389–Leu-568 are allosteric regulation domain; adenylyl-sulfate kinase-like. Residues Asp-428 to Arg-431, Arg-445, Ile-471 to Ala-472, and Arg-510 each bind 3'-phosphoadenylyl sulfate.

In the N-terminal section; belongs to the sulfate adenylyltransferase family. The protein in the C-terminal section; belongs to the APS kinase family. Homohexamer. Dimer of trimers.

It is found in the cytoplasm. The enzyme catalyses sulfate + ATP + H(+) = adenosine 5'-phosphosulfate + diphosphate. The protein operates within sulfur metabolism; hydrogen sulfide biosynthesis; sulfite from sulfate: step 1/3. With respect to regulation, allosterically inhibited by 3'-phosphoadenosine 5'-phosphosulfate (PAPS). Functionally, catalyzes the first intracellular reaction of sulfate assimilation, forming adenosine-5'-phosphosulfate (APS) from inorganic sulfate and ATP. Plays an important role in sulfate activation as a component of the biosynthesis pathway of sulfur-containing amino acids. The sequence is that of Sulfate adenylyltransferase from Aspergillus terreus.